A 284-amino-acid chain; its full sequence is MMTAIAPSQSGQRLALLIQYQGTHFHGWQRQVGQRTVQEVIEQAIASVVNHPVSVVAAGRTDTGVHAAGQVAHVTVNSPIPVHRWPGILNARLPADVVIRAAAAVPPDWHARFSALWRRYRYTLYTDPCPNIFLRPWTWHYYYAPLDVAKMAAVLQPLVGRHHLSAFHRSGSNRAHSWVEVQAVSCQRRGALVEIEVQASGFLYGMMRLLVGLLVQVGQGQRSPASFTEIWQQEQRHLVKYAAPPSGLCLLGVGYPESPFPLALCTEAMPQFQLASVCPELSIA.

Aspartate 62 (nucleophile) is an active-site residue. Tyrosine 120 contributes to the substrate binding site.

Belongs to the tRNA pseudouridine synthase TruA family. As to quaternary structure, homodimer.

The catalysed reaction is uridine(38/39/40) in tRNA = pseudouridine(38/39/40) in tRNA. Its function is as follows. Formation of pseudouridine at positions 38, 39 and 40 in the anticodon stem and loop of transfer RNAs. In Thermosynechococcus vestitus (strain NIES-2133 / IAM M-273 / BP-1), this protein is tRNA pseudouridine synthase A.